The following is a 593-amino-acid chain: V-type ATP synthase alpha chain (593 aa).

G246–T253 contributes to the ATP binding site.

The protein belongs to the ATPase alpha/beta chains family.

It catalyses the reaction ATP + H2O + 4 H(+)(in) = ADP + phosphate + 5 H(+)(out). Its function is as follows. Produces ATP from ADP in the presence of a proton gradient across the membrane. The V-type alpha chain is a catalytic subunit. The polypeptide is V-type ATP synthase alpha chain (Protochlamydia amoebophila (strain UWE25)).